A 662-amino-acid chain; its full sequence is Biosynthetic arginine decarboxylase (662 aa).

At Lys127 the chain carries N6-(pyridoxal phosphate)lysine. A substrate-binding site is contributed by 307-317; sequence FDVGGGLGVDY.

Belongs to the Orn/Lys/Arg decarboxylase class-II family. SpeA subfamily. Homotetramer. The cofactor is Mg(2+). Pyridoxal 5'-phosphate serves as cofactor.

The protein resides in the periplasm. The catalysed reaction is L-arginine + H(+) = agmatine + CO2. Its pathway is amine and polyamine biosynthesis; agmatine biosynthesis; agmatine from L-arginine: step 1/1. Functionally, catalyzes the biosynthesis of agmatine from arginine. The polypeptide is Biosynthetic arginine decarboxylase (Shigella flexneri).